We begin with the raw amino-acid sequence, 815 residues long: (E)-gamma-bisabolene synthase (815 aa).

Mg(2+) is bound by residues D561, D565, D709, and E717. The short motif at 561-565 (DDMYD) is the DDXXD motif element.

It belongs to the terpene synthase family. Tpsd subfamily. Mg(2+) serves as cofactor. It depends on Mn(2+) as a cofactor.

The protein localises to the cytoplasm. It catalyses the reaction (2E,6E)-farnesyl diphosphate = (E)-gamma-bisabolene + diphosphate. It functions in the pathway terpene metabolism; oleoresin biosynthesis. Its function is as follows. Involved in defensive oleoresin formation in conifers in response to insect attack or other injury. Involved in sesquiterpene (C15) olefins biosynthesis. Produces mainly (E)-gamma-bisabolene when used with farnesyl diphosphate as substrate. No activity with geranyl diphosphate or geranylgeranyl diphosphate. This is (E)-gamma-bisabolene synthase (TPS3) from Pseudotsuga menziesii (Douglas-fir).